A 210-amino-acid polypeptide reads, in one-letter code: LexA repressor (210 aa).

A DNA-binding region (H-T-H motif) is located at residues 29–49 (VREIGEAVDLSSTSTVHGHIS). Active-site for autocatalytic cleavage activity residues include serine 130 and lysine 168.

Belongs to the peptidase S24 family. Homodimer.

It carries out the reaction Hydrolysis of Ala-|-Gly bond in repressor LexA.. Represses a number of genes involved in the response to DNA damage (SOS response), including recA and lexA. In the presence of single-stranded DNA, RecA interacts with LexA causing an autocatalytic cleavage which disrupts the DNA-binding part of LexA, leading to derepression of the SOS regulon and eventually DNA repair. The chain is LexA repressor from Lactiplantibacillus plantarum (strain ATCC BAA-793 / NCIMB 8826 / WCFS1) (Lactobacillus plantarum).